A 207-amino-acid polypeptide reads, in one-letter code: Urease accessory protein UreG (207 aa).

Residue 14–21 coordinates GTP; sequence GPVGSGKT.

The protein belongs to the SIMIBI class G3E GTPase family. UreG subfamily. As to quaternary structure, homodimer. UreD, UreF and UreG form a complex that acts as a GTP-hydrolysis-dependent molecular chaperone, activating the urease apoprotein by helping to assemble the nickel containing metallocenter of UreC. The UreE protein probably delivers the nickel.

Its subcellular location is the cytoplasm. In terms of biological role, facilitates the functional incorporation of the urease nickel metallocenter. This process requires GTP hydrolysis, probably effectuated by UreG. The sequence is that of Urease accessory protein UreG from Pseudomonas putida (strain GB-1).